An 80-amino-acid chain; its full sequence is Small ribosomal subunit protein bS18 (80 aa).

The protein belongs to the bacterial ribosomal protein bS18 family. Part of the 30S ribosomal subunit. Forms a tight heterodimer with protein bS6.

Its function is as follows. Binds as a heterodimer with protein bS6 to the central domain of the 16S rRNA, where it helps stabilize the platform of the 30S subunit. The chain is Small ribosomal subunit protein bS18 from Staphylococcus carnosus (strain TM300).